We begin with the raw amino-acid sequence, 330 residues long: MASINLIKSLKLYKEKIWSFDFSQGILATGSTDRKIKLVSVKYDDFTLIDVLDETAHKKAIRSVAWRPHTSLLAAGSFDSTVSIWAKEESADRTFEMDLLAIIEGHENEVKGVAWSNDGYYLATCSRDKSVWIWETDESGEEYECISVLQEHSQDVKHVIWHPSEALLASSSYDDTVRIWKDYDDDWECVAVLNGHEGTVWSSDFDKTEGVFRLCSGSDDSTVRVWKYMGDDEDDQQEWVCEAILPDVHKRQVYNVAWGFNGLIASVGADGVLAVYEEVDGEWKVFAKRALCHGVYEINVVKWLELNGKTILATGGDDGIVNFWSLEKAA.

7 WD repeats span residues 12–53, 56–95, 105–144, 151–190, 195–236, 248–286, and 292–330; these read LYKE…DVLD, AHKKAIRSVAWRPHTSLLAAGSFDSTVSIWAKEESADRTF, GHENEVKGVAWSNDGYYLATCSRDKSVWIWETDESGEEYE, EHSQDVKHVIWHPSEALLASSSYDDTVRIWKDYDDDWECV, GHEG…EDDQ, VHKRQVYNVAWGFNGLIASVGADGVLAVYEEVDGEWKVF, and CHGVYEINVVKWLELNGKTILATGGDDGIVNFWSLEKAA.

The protein belongs to the WD repeat CIA1 family. As to quaternary structure, interacts with NAR1.

It is found in the cytoplasm. The protein localises to the nucleus. Essential component of the cytosolic iron-sulfur (Fe/S) protein assembly machinery. Required for the maturation of extramitochondrial Fe/S proteins. This is Cytosolic iron-sulfur protein assembly protein 1 from Saccharomyces cerevisiae (strain ATCC 204508 / S288c) (Baker's yeast).